The following is a 466-amino-acid chain: ATP synthase subunit beta (466 aa).

Residue 148–155 coordinates ATP; sequence GGAGVGKT.

Belongs to the ATPase alpha/beta chains family. F-type ATPases have 2 components, CF(1) - the catalytic core - and CF(0) - the membrane proton channel. CF(1) has five subunits: alpha(3), beta(3), gamma(1), delta(1), epsilon(1). CF(0) has three main subunits: a(1), b(2) and c(9-12). The alpha and beta chains form an alternating ring which encloses part of the gamma chain. CF(1) is attached to CF(0) by a central stalk formed by the gamma and epsilon chains, while a peripheral stalk is formed by the delta and b chains.

Its subcellular location is the cell inner membrane. The enzyme catalyses ATP + H2O + 4 H(+)(in) = ADP + phosphate + 5 H(+)(out). Functionally, produces ATP from ADP in the presence of a proton gradient across the membrane. The catalytic sites are hosted primarily by the beta subunits. In Xylella fastidiosa (strain M12), this protein is ATP synthase subunit beta.